We begin with the raw amino-acid sequence, 245 residues long: 1-(5-phosphoribosyl)-5-[(5-phosphoribosylamino)methylideneamino] imidazole-4-carboxamide isomerase (245 aa).

The active-site Proton acceptor is D8. Residue D130 is the Proton donor of the active site.

This sequence belongs to the HisA/HisF family.

It is found in the cytoplasm. The enzyme catalyses 1-(5-phospho-beta-D-ribosyl)-5-[(5-phospho-beta-D-ribosylamino)methylideneamino]imidazole-4-carboxamide = 5-[(5-phospho-1-deoxy-D-ribulos-1-ylimino)methylamino]-1-(5-phospho-beta-D-ribosyl)imidazole-4-carboxamide. It participates in amino-acid biosynthesis; L-histidine biosynthesis; L-histidine from 5-phospho-alpha-D-ribose 1-diphosphate: step 4/9. The polypeptide is 1-(5-phosphoribosyl)-5-[(5-phosphoribosylamino)methylideneamino] imidazole-4-carboxamide isomerase (Pseudomonas putida (strain ATCC 47054 / DSM 6125 / CFBP 8728 / NCIMB 11950 / KT2440)).